A 158-amino-acid polypeptide reads, in one-letter code: Transcription elongation factor GreA (158 aa).

This sequence belongs to the GreA/GreB family.

Its function is as follows. Necessary for efficient RNA polymerase transcription elongation past template-encoded arresting sites. The arresting sites in DNA have the property of trapping a certain fraction of elongating RNA polymerases that pass through, resulting in locked ternary complexes. Cleavage of the nascent transcript by cleavage factors such as GreA or GreB allows the resumption of elongation from the new 3'terminus. GreA releases sequences of 2 to 3 nucleotides. This is Transcription elongation factor GreA from Methylobacterium nodulans (strain LMG 21967 / CNCM I-2342 / ORS 2060).